We begin with the raw amino-acid sequence, 123 residues long: Histone H2B.1, embryonic (123 aa).

Positions 1–32 (MAPTGQVAKKGSKKAVKPPRASGGKKRHRKRK) are disordered. The segment covering 10–32 (KGSKKAVKPPRASGGKKRHRKRK) has biased composition (basic residues). Ser-110 is a glycosylation site (O-linked (GlcNAc) serine). Residue Lys-118 forms a Glycyl lysine isopeptide (Lys-Gly) (interchain with G-Cter in ubiquitin) linkage.

It belongs to the histone H2B family. As to quaternary structure, the nucleosome is a histone octamer containing two molecules each of H2A, H2B, H3 and H4 assembled in one H3-H4 heterotetramer and two H2A-H2B heterodimers. The octamer wraps approximately 147 bp of DNA. Monoubiquitination of Lys-118 gives a specific tag for epigenetic transcriptional activation and is also prerequisite for histone H3 'Lys-4' and 'Lys-79' methylation. In terms of processing, glcNAcylation at Ser-110 promotes monoubiquitination of Lys-118. It fluctuates in response to extracellular glucose, and associates with transcribed genes.

Its subcellular location is the nucleus. The protein resides in the chromosome. Its function is as follows. Core component of nucleosome. Nucleosomes wrap and compact DNA into chromatin, limiting DNA accessibility to the cellular machineries which require DNA as a template. Histones thereby play a central role in transcription regulation, DNA repair, DNA replication and chromosomal stability. DNA accessibility is regulated via a complex set of post-translational modifications of histones, also called histone code, and nucleosome remodeling. The chain is Histone H2B.1, embryonic from Psammechinus miliaris (Green sea urchin).